Here is an 841-residue protein sequence, read N- to C-terminus: DNA ligase (841 aa).

NAD(+) is bound by residues 54 to 58 (DAEYD), 103 to 104 (SL), and Glu143. Lys145 acts as the N6-AMP-lysine intermediate in catalysis. Residues Arg166, Glu203, Lys321, and Lys345 each contribute to the NAD(+) site. Residues Cys471, Cys474, Cys489, and Cys495 each contribute to the Zn(2+) site. Residues 554–575 (KTVAESDQMPSEGSSVGASGKH) are disordered. The segment covering 561 to 570 (QMPSEGSSVG) has biased composition (polar residues). Residues 764 to 841 (GINKAVAGKT…SEAELLTLLG (78 aa)) enclose the BRCT domain.

Belongs to the NAD-dependent DNA ligase family. LigA subfamily. The cofactor is Mg(2+). Mn(2+) serves as cofactor.

It catalyses the reaction NAD(+) + (deoxyribonucleotide)n-3'-hydroxyl + 5'-phospho-(deoxyribonucleotide)m = (deoxyribonucleotide)n+m + AMP + beta-nicotinamide D-nucleotide.. Functionally, DNA ligase that catalyzes the formation of phosphodiester linkages between 5'-phosphoryl and 3'-hydroxyl groups in double-stranded DNA using NAD as a coenzyme and as the energy source for the reaction. It is essential for DNA replication and repair of damaged DNA. The polypeptide is DNA ligase (Neisseria meningitidis serogroup C (strain 053442)).